A 749-amino-acid polypeptide reads, in one-letter code: MQTSETGSDTGSTVTLQTSVASQAAVPTQVVQQVPVQQQVQQVQTVQQVQHVYPAQVQYVEGSDTVYTNGAIRTTTYPYTETQMYSQNTGGNYFDTQGSSAQVTTVVSSHSMVGTGGIQMGVTGGQLISSSGGTYLIGNSMENSGHSVTHTTRASPATIEMAIETLQKSDGLSTHRSSLLNSHLQWLLDNYETAEGVSLPRSTLYNHYLRHCQEHKLDPVNAASFGKLIRSIFMGLRTRRLGTRGNSKYHYYGIRVKPDSPLNRLQEDMQYMAMRQQPMQQKQRYKPMQKVDGVADGFTGSGQQTGTSVEQTVIAQSQHHQQFLDASRALPEFGEVEISSLPDGTTFEDIKSLQSLYREHCEAILDVVVNLQFSLIEKLWQTFWRYSPSTPADGTTITESSNLSEIESRLPKAKLITLCKHESILKWMCNCDHGMYQALVEILIPDVLRPIPSALTQAIRNFAKSLEGWLSNAMNNIPQRMIQTKVAAVSAFAQTLRRYTSLNHLAQAARAVLQNTSQINQMLSDLNRVDFANVQEQASWVCQCDDNMVQRLETDFKMTLQQQSTLEQWAAWLDNVMMQALKPYEGRPSFPKAARQFLLKWSFYSSMVIRDLTLRSAASFGSFHLIRLLYDEYMFYLVEHRVAQVTGETPIAVMGEFGDLNAVSPGNLDKDEGSEVESETDEDLDDSSEPRAKREKTELSQAFPVGCMQPVLESAVQPSLLNPLHSEHIVTSTQTIRQCSATGNTYTAV.

A DNA-binding region (RFX-type winged-helix) is located at residues histidine 183–proline 258. The segment at valine 663–leucine 699 is disordered. Residues serine 674–serine 687 show a composition bias toward acidic residues. Residues serine 688–glutamate 698 show a composition bias toward basic and acidic residues.

Belongs to the RFX family. Heterodimer; heterodimerizes with RFX1 and RFX2, and RFX6. Expressed in ciliated cells of the node and in the ciliated ependymal cells of the subcommissural organ (SCO), choroid plexuses (CP) and ventricular walls during embryonic and postnatal development. Expressed in developing and mature pancreatic endocrine cells during embryogenesis and in adults (at protein level).

It is found in the nucleus. Its function is as follows. Transcription factor required for ciliogenesis and islet cell differentiation during endocrine pancreas development. Essential for the differentiation of nodal monocilia and left-right asymmetry specification during embryogenesis. Required for the biogenesis of motile cilia by governing growth and beating efficiency of motile cells. Also required for ciliated ependymal cell differentiation. Together with RFX6, participates in the differentiation of 4 of the 5 islet cell types during endocrine pancreas development, with the exception of pancreatic PP (polypeptide-producing) cells. Regulates transcription by forming a heterodimer with another RFX protein and binding to the X-box in the promoter of target genes. Regulates the expression of genes involved in ciliary assembly (DYNC2LI1, FOXJ1 and BBS4) and genes involved in ciliary motility (DNAH11, DNAH9 and DNAH5). Represses transcription of MAP1A in non-neuronal cells but not in neuronal cells. This Mus musculus (Mouse) protein is Transcription factor RFX3 (Rfx3).